Reading from the N-terminus, the 179-residue chain is Large ribosomal subunit protein uL6 (179 aa).

The protein belongs to the universal ribosomal protein uL6 family. In terms of assembly, part of the 50S ribosomal subunit.

Its function is as follows. This protein binds to the 23S rRNA, and is important in its secondary structure. It is located near the subunit interface in the base of the L7/L12 stalk, and near the tRNA binding site of the peptidyltransferase center. The protein is Large ribosomal subunit protein uL6 of Acidobacterium capsulatum (strain ATCC 51196 / DSM 11244 / BCRC 80197 / JCM 7670 / NBRC 15755 / NCIMB 13165 / 161).